Consider the following 103-residue polypeptide: L-rhamnose-binding lectin ELEL-1 (103 aa).

An SUEL-type lectin domain is found at 13 to 102 (VCEGSSLTIS…KYLELSYDCS (90 aa)). 4 cysteine pairs are disulfide-bonded: Cys-14–Cys-45, Cys-23–Cys-101, Cys-56–Cys-88, and Cys-69–Cys-75.

As to quaternary structure, homodimer; disulfide-linked. Post-translationally, not glycosylated.

Functionally, rhamnose-binding lectin. Also binds alpha-D-melibiose, alpha-D-lactose, beta-D-lactose, methyl-alpha-D-galactopyranoside, methyl-beta-D--galactopyranoside and D-galactose but not D-arabinose, L-fucose, D-glucose, D-mannose, D-maltose, D-sucrose, N-acetyl-D-galactosamine, N-acetyl-D-glucosamine, N-acetyl-D-mannosamine-D-xylose or by glycoproteins orosomucoid, thyroglobulin, ovomucoid and porcine stomach mucin. Shows cation-independent hemagglutinating activity against rabbit and human erythrocytes. Agglutinates cells of Gram-positive bacterial species S.aureus but not those of Gram-negative E.coli. This Echinometra lucunter (Rock-boring urchin) protein is L-rhamnose-binding lectin ELEL-1.